We begin with the raw amino-acid sequence, 492 residues long: Glycosyltransferase alg8 (492 aa).

The next 4 helical transmembrane spans lie at 13 to 32, 47 to 69, 379 to 401, and 421 to 443; these read GWLL…PPQV, IGVW…LYVV, LTVA…LLWV, and PAYP…HVFF.

Belongs to the glycosyltransferase 2 family.

It is found in the cell membrane. It participates in glycan biosynthesis; alginate biosynthesis. Functionally, possibly a processive enzyme that polymerizes GDP-mannuronic acid. The polypeptide is Glycosyltransferase alg8 (alg8) (Azotobacter vinelandii).